The following is a 466-amino-acid chain: Argininosuccinate lyase (466 aa).

This sequence belongs to the lyase 1 family. Argininosuccinate lyase subfamily.

Its subcellular location is the cytoplasm. The enzyme catalyses 2-(N(omega)-L-arginino)succinate = fumarate + L-arginine. Its pathway is amino-acid biosynthesis; L-arginine biosynthesis; L-arginine from L-ornithine and carbamoyl phosphate: step 3/3. This is Argininosuccinate lyase from Bartonella bacilliformis (strain ATCC 35685 / KC583 / Herrer 020/F12,63).